Reading from the N-terminus, the 358-residue chain is Protein Wnt-8b (358 aa).

Positions 1 to 23 (MFMHLEVYYYAFILMAHMKTCCG) are cleaved as a signal peptide. Residues cysteine 55 and cysteine 66 are joined by a disulfide bond. A glycan (N-linked (GlcNAc...) asparagine) is linked at asparagine 104. 10 disulfides stabilise this stretch: cysteine 105-cysteine 113, cysteine 115-cysteine 133, cysteine 181-cysteine 195, cysteine 183-cysteine 190, cysteine 257-cysteine 295, cysteine 273-cysteine 288, cysteine 292-cysteine 334, cysteine 310-cysteine 325, cysteine 312-cysteine 322, and cysteine 317-cysteine 318. The O-palmitoleoyl serine moiety is linked to residue serine 187. Residues asparagine 260 and asparagine 279 are each glycosylated (N-linked (GlcNAc...) asparagine). Residue asparagine 345 is glycosylated (N-linked (GlcNAc...) asparagine).

The protein belongs to the Wnt family. Palmitoleoylation is required for efficient binding to frizzled receptors. Depalmitoleoylation leads to Wnt signaling pathway inhibition. Post-translationally, proteolytic processing by tiki1 and tiki2 promotes oxidation and formation of large disulfide-bond oligomers, leading to inactivation of wnt8b. In terms of tissue distribution, hindbrain r1, 2 and 5.

It is found in the secreted. The protein localises to the extracellular space. The protein resides in the extracellular matrix. In terms of biological role, ligand for fzd8a, a member of the G-protein coupled frizzled receptor family. May play a role in the establishment of polarity in the nervous system. Involved in canonical Wnt signaling pathway. During embryonic development, required for the acquisition of caudal diencephalic fate. Antagonizes eye specification. In Danio rerio (Zebrafish), this protein is Protein Wnt-8b (wnt8b).